A 402-amino-acid chain; its full sequence is MRVIDGGVTAPKGFKANGYKEGKFGVAIIISEKDAVGAGTFTTNKVVAHPVVLSRELIKNRDKFRAIVANSGNANCFTKDGMEDAKEMQRLVAELFNINEDEVLVASTGVIGRKMDMNIIKDRINKVYNLIKEGNSSINAAKAIMTTDTKPKEIAVEFEVNGKTVRVGGIAKGAGMIAPNMLHATMLCFITTDIEIDKESLTNILQKVVDKTFNNISVDGDTSTNDTVFVLANGLSGVNYEECGEEFENALLYVCRELAKMIVKDGEGATKFMEVVVKGAKTEEDAVKASKAIVNSLLVKTAVFGGDPNWGRIVAAVGYSGADFNPEVVDVILSNYKDEVYLVKDGIPLADEGTEELKKAEEIMKSDEIKIVVDLKMGEFENVCYGCDLSYEYVRINAEYTT.

Thr-146, Lys-172, Thr-185, Glu-267, Asn-397, and Thr-402 together coordinate substrate. The active-site Nucleophile is the Thr-185.

This sequence belongs to the ArgJ family. Heterotetramer of two alpha and two beta chains.

The protein resides in the cytoplasm. The catalysed reaction is N(2)-acetyl-L-ornithine + L-glutamate = N-acetyl-L-glutamate + L-ornithine. The protein operates within amino-acid biosynthesis; L-arginine biosynthesis; L-ornithine and N-acetyl-L-glutamate from L-glutamate and N(2)-acetyl-L-ornithine (cyclic): step 1/1. With respect to regulation, competitively inhibited by L-ornithine. In terms of biological role, catalyzes the transfer of the acetyl group from N(2)-acetylornithine to glutamate, forming N-acetylglutamate and L-ornithine. The polypeptide is Glutamate N-acetyltransferase (Methanocaldococcus jannaschii (strain ATCC 43067 / DSM 2661 / JAL-1 / JCM 10045 / NBRC 100440) (Methanococcus jannaschii)).